Consider the following 298-residue polypeptide: Probable 3-hydroxyacyl-CoA dehydrogenase F54C8.1 (298 aa).

The protein belongs to the 3-hydroxyacyl-CoA dehydrogenase family. In terms of assembly, homodimer.

The protein localises to the mitochondrion matrix. It carries out the reaction a (3S)-3-hydroxyacyl-CoA + NAD(+) = a 3-oxoacyl-CoA + NADH + H(+). It participates in lipid metabolism; fatty acid beta-oxidation. The polypeptide is Probable 3-hydroxyacyl-CoA dehydrogenase F54C8.1 (Caenorhabditis elegans).